Here is a 692-residue protein sequence, read N- to C-terminus: MVQSELQLQPRAGGRAEAASWGDRGNDKGGFGNPDMPSVSPGPQRPPKLSSLAYDSPPDYLQTVSHPEAYRVLFDYQPEAPDELTLRRGDVVKVLSKTTEDKGWWEGECQGRRGVFPDNFVLPPPPIKKLVPRKVVSRQSAPIKEPKKLMPKTSLPTVKKLATAATGPSKAKTSRTPSRDSQKLTSRDSGPNGGFQSGGSCPPGRKRSKTQTPQQRSVSSQEEEHSSPAKAPSVKRTPMLDKTTTPERPPAPENAPGSKKIPVPDKVPSPEKTLTLGDKASIPGNSTSGKIPGPDIVPTPERMVTPEDKASIPENSIPEEALTVDKPSTPERLSSVEEASGPEVPPMDKVPDPKMAPLGDEAPTREKVLTPELSEEEVSTRDDTQFHHFSSEEALQKVKSFVAKEAPSSQEKAHTPEAPPLQPPSSEKCLGEMKCPLVRGDSSPHQAELKSGPASRPALEKPHPQAEATTLLEEAPSKEERTPEEEASPNEERLLRGEVLPKEGVASKGEVLPKEGVASKGEVLPKEGVASKEVLPKGGVASKEEVLPKEGVASKEEMLPKEGVASKEEVTLKEEVAPKEEVPPIDTAFAQKTHPIKPSPDSQETLTLPSLLPQNYTENKNEGVDVTSLRGEVESLRRALELMGVQLERKLTDIWEELKSEKEQRQRLEVQVMQGTQKSQTPRIIHAQTQTY.

A disordered region spans residues 1-60 (MVQSELQLQPRAGGRAEAASWGDRGNDKGGFGNPDMPSVSPGPQRPPKLSSLAYDSPPDY). The SH3 domain maps to 65 to 126 (SHPEAYRVLF…PDNFVLPPPP (62 aa)). 3 disordered regions span residues 132–501 (PRKV…EVLP), 536–605 (PKGG…SQET), and 672–692 (VMQG…TQTY). Residues 177–186 (PSRDSQKLTS) are compositionally biased toward basic and acidic residues. Residues 210–220 (TQTPQQRSVSS) are compositionally biased toward polar residues. Basic and acidic residues-rich tracts occupy residues 378–396 (VSTR…EALQ), 490–501 (NEERLLRGEVLP), and 542–582 (SKEE…KEEV). Residues 628-678 (SLRGEVESLRRALELMGVQLERKLTDIWEELKSEKEQRQRLEVQVMQGTQK) adopt a coiled-coil conformation. Positions 673 to 692 (MQGTQKSQTPRIIHAQTQTY) are enriched in polar residues.

In Macaca fascicularis (Crab-eating macaque), this protein is SH3 domain-containing protein 21 (SH3D21).